A 203-amino-acid chain; its full sequence is Nascent polypeptide-associated complex subunit alpha-like protein 1 (203 aa).

The segment covering 1-23 has biased composition (basic and acidic residues); sequence MTTEEKEILAAKLEEQKIDLDKP. Residues 1–71 form a disordered region; sequence MTTEEKEILA…SEKKSRKAML (71 aa). Positions 24–50 are enriched in acidic residues; sequence EVEDDDDNEDDDSDDDDKDDDEADGLD. Serine 36 is modified (phosphoserine). One can recognise an NAC-A/B domain in the interval 60–125; the sequence is SRSEKKSRKA…AKIEDLSSQI (66 aa). Residues 158 to 203 enclose the UBA domain; sequence EVDEEGVEPKDIELVMTQAGVSRPNAVKALKAADGDIVSAIMELTT.

It belongs to the NAC-alpha family.

Functionally, may promote appropriate targeting of ribosome-nascent polypeptide complexes. This Arabidopsis thaliana (Mouse-ear cress) protein is Nascent polypeptide-associated complex subunit alpha-like protein 1.